Reading from the N-terminus, the 109-residue chain is Nucleoid-associated protein VS_0917 (109 aa).

2 disordered regions span residues 1-22 (MFGKGGMGNMMKQAQQMQERMQ) and 88-109 (QKEKMAGVTGGMQLPPGMKMPF). A compositionally biased stretch (low complexity) spans 9–18 (NMMKQAQQMQ).

This sequence belongs to the YbaB/EbfC family. Homodimer.

The protein localises to the cytoplasm. It localises to the nucleoid. Its function is as follows. Binds to DNA and alters its conformation. May be involved in regulation of gene expression, nucleoid organization and DNA protection. This chain is Nucleoid-associated protein VS_0917, found in Vibrio atlanticus (strain LGP32) (Vibrio splendidus (strain Mel32)).